Reading from the N-terminus, the 380-residue chain is Cytochrome b (380 aa).

Transmembrane regions (helical) follow at residues 33–53 (FGSL…FLAM), 77–98 (WLIR…YLHI), 113–133 (WNVG…GYVL), and 178–198 (FFAF…LHLL). Positions 83 and 97 each coordinate heme b. Heme b is bound by residues His182 and His196. His201 serves as a coordination point for a ubiquinone. The next 4 membrane-spanning stretches (helical) occupy residues 226–246 (YKDL…ALFS), 288–308 (LGGV…PILH), 320–340 (FSQI…WIGG), and 347–367 (YIII…VFFP).

This sequence belongs to the cytochrome b family. The cytochrome bc1 complex contains 3 respiratory subunits (MT-CYB, CYC1 and UQCRFS1), 2 core proteins (UQCRC1 and UQCRC2) and probably 6 low-molecular weight proteins. Requires heme b as cofactor.

Its subcellular location is the mitochondrion inner membrane. Functionally, component of the ubiquinol-cytochrome c reductase complex (complex III or cytochrome b-c1 complex) that is part of the mitochondrial respiratory chain. The b-c1 complex mediates electron transfer from ubiquinol to cytochrome c. Contributes to the generation of a proton gradient across the mitochondrial membrane that is then used for ATP synthesis. In Apogon semilineatus (Half-lined cardinal), this protein is Cytochrome b (mt-cyb).